We begin with the raw amino-acid sequence, 203 residues long: 5-formyltetrahydrofolate cyclo-ligase (203 aa).

Position 2 is an N-acetylalanine (A2). Residues 10-14 and R14 each bind ATP; that span reads KRSLR. Residues L56, E61, and 148-152 contribute to the substrate site; that span reads RGKGY. 145–153 lines the ATP pocket; it reads RLGRGKGYY. Mg(2+) contacts are provided by D154 and D189.

The protein belongs to the 5-formyltetrahydrofolate cyclo-ligase family. As to quaternary structure, monomer. It depends on Mg(2+) as a cofactor.

The protein resides in the cytoplasm. It catalyses the reaction (6S)-5-formyl-5,6,7,8-tetrahydrofolate + ATP = (6R)-5,10-methenyltetrahydrofolate + ADP + phosphate. Contributes to tetrahydrofolate metabolism. Helps regulate carbon flow through the folate-dependent one-carbon metabolic network that supplies carbon for the biosynthesis of purines, thymidine and amino acids. Catalyzes the irreversible conversion of 5-formyltetrahydrofolate (5-FTHF) to yield 5,10-methenyltetrahydrofolate. This Homo sapiens (Human) protein is 5-formyltetrahydrofolate cyclo-ligase (MTHFS).